Consider the following 212-residue polypeptide: Ribonuclease HII (212 aa).

The 203-residue stretch at 4–206 (EVQCGIDEAG…YKKIKEDVES (203 aa)) folds into the RNase H type-2 domain. 3 residues coordinate a divalent metal cation: Asp10, Glu11, and Asp103.

It belongs to the RNase HII family. Mn(2+) serves as cofactor. Mg(2+) is required as a cofactor.

The protein resides in the cytoplasm. The catalysed reaction is Endonucleolytic cleavage to 5'-phosphomonoester.. In terms of biological role, endonuclease that specifically degrades the RNA of RNA-DNA hybrids. The polypeptide is Ribonuclease HII (Thermoplasma volcanium (strain ATCC 51530 / DSM 4299 / JCM 9571 / NBRC 15438 / GSS1)).